A 181-amino-acid chain; its full sequence is Acireductone dioxygenase (181 aa).

The Fe(2+) site is built by His-98, His-100, Glu-104, and His-142. Residues His-98, His-100, Glu-104, and His-142 each contribute to the Ni(2+) site.

Belongs to the acireductone dioxygenase (ARD) family. In terms of assembly, monomer. It depends on Fe(2+) as a cofactor. The cofactor is Ni(2+).

It carries out the reaction 1,2-dihydroxy-5-(methylsulfanyl)pent-1-en-3-one + O2 = 3-(methylsulfanyl)propanoate + CO + formate + 2 H(+). The enzyme catalyses 1,2-dihydroxy-5-(methylsulfanyl)pent-1-en-3-one + O2 = 4-methylsulfanyl-2-oxobutanoate + formate + 2 H(+). It participates in amino-acid biosynthesis; L-methionine biosynthesis via salvage pathway; L-methionine from S-methyl-5-thio-alpha-D-ribose 1-phosphate: step 5/6. Functionally, catalyzes 2 different reactions between oxygen and the acireductone 1,2-dihydroxy-3-keto-5-methylthiopentene (DHK-MTPene) depending upon the metal bound in the active site. Fe-containing acireductone dioxygenase (Fe-ARD) produces formate and 2-keto-4-methylthiobutyrate (KMTB), the alpha-ketoacid precursor of methionine in the methionine recycle pathway. Ni-containing acireductone dioxygenase (Ni-ARD) produces methylthiopropionate, carbon monoxide and formate, and does not lie on the methionine recycle pathway. The chain is Acireductone dioxygenase from Synechococcus sp. (strain ATCC 27144 / PCC 6301 / SAUG 1402/1) (Anacystis nidulans).